The sequence spans 400 residues: Argininosuccinate synthase (400 aa).

An ATP-binding site is contributed by 8 to 16 (AYSGGLDTS). L-citrulline is bound by residues Tyr86 and Ser91. Gly116 contacts ATP. L-aspartate is bound by residues Thr118, Asn122, and Asp123. Asn122 is a binding site for L-citrulline. The L-citrulline site is built by Arg126, Ser175, Ser184, Glu260, and Tyr272.

This sequence belongs to the argininosuccinate synthase family. Type 1 subfamily. Homotetramer.

It is found in the cytoplasm. The enzyme catalyses L-citrulline + L-aspartate + ATP = 2-(N(omega)-L-arginino)succinate + AMP + diphosphate + H(+). The protein operates within amino-acid biosynthesis; L-arginine biosynthesis; L-arginine from L-ornithine and carbamoyl phosphate: step 2/3. The polypeptide is Argininosuccinate synthase (Clostridium acetobutylicum (strain ATCC 824 / DSM 792 / JCM 1419 / IAM 19013 / LMG 5710 / NBRC 13948 / NRRL B-527 / VKM B-1787 / 2291 / W)).